We begin with the raw amino-acid sequence, 313 residues long: R2-like ligand binding oxidase (313 aa).

Mn(2+)-binding residues include Glu68, Glu101, and His104. The 3-(O4'-tyrosyl)-valine (Val-Tyr) cross-link spans 71 to 162; that stretch reads VTQDIQPFMS…AAQVRASVTY (92 aa). Glu101 provides a ligand contact to Fe cation. Fe cation contacts are provided by Glu167, Glu202, and His205.

This sequence belongs to the ribonucleoside diphosphate reductase small chain family. R2-like ligand binding oxidase subfamily. Homodimer. It depends on Fe cation as a cofactor. Requires Mn(2+) as cofactor.

In terms of biological role, probable oxidase that might be involved in lipid metabolism. The polypeptide is R2-like ligand binding oxidase (Mycobacteroides abscessus (strain ATCC 19977 / DSM 44196 / CCUG 20993 / CIP 104536 / JCM 13569 / NCTC 13031 / TMC 1543 / L948) (Mycobacterium abscessus)).